Here is a 789-residue protein sequence, read N- to C-terminus: SH3 domain-containing protein 19 (789 aa).

3 disordered regions span residues 24–170 (TNTE…PPRL), 209–404 (DDDV…RPKP), and 472–497 (TPLD…SGAP). Position 65 is a phosphoserine (serine 65). Residues 296–305 (SHSDRTRNPE) are compositionally biased toward basic and acidic residues. A compositionally biased stretch (pro residues) spans 335 to 351 (WRPPPKGAPERPPPPKL). Low complexity predominate over residues 352 to 361 (PASKSSNKNL). Phosphoserine is present on serine 368. SH3 domains are found at residues 414-476 (LSVP…PLDE), 494-553 (SGAP…VIVD), 570-629 (AKGP…LVGD), 660-719 (PPGE…PCPA), and 729-788 (PKGR…FLQV). Residues 474-484 (LDERPRGRPND) are compositionally biased toward basic and acidic residues. The disordered stretch occupies residues 635-663 (ANILSTKVPPKTKNEDPGSNSQDSSPPGE).

In terms of assembly, interacts with ADAM12. Isoform 2 (but not isoform 1) interacts with ADAM9, ADAM10, ADAM15 and ADAM17. Interacts with SH3GL1 SH3 domain. Interacts via SH3 3 and SH3 4 or SH3 4 and SH3 5 domains with SOS2. Probably forms a trimeric complex with SH3GL1 and SOS2. Interacts with SH3YL1. Expressed in hair follicles.

The protein localises to the cytoplasm. May play a role in regulating A disintegrin and metalloproteases (ADAMs) in the signaling of EGFR-ligand shedding. May be involved in suppression of Ras-induced cellular transformation and Ras-mediated activation of ELK1. Plays a role in the regulation of cell morphology and cytoskeletal organization. This Mus musculus (Mouse) protein is SH3 domain-containing protein 19 (Sh3d19).